A 439-amino-acid chain; its full sequence is Hemagglutinin-esterase (439 aa).

Positions 1 to 22 (MGCMCIAMAPRTLLLLIGCQLV) are cleaved as a signal peptide. Positions 12–132 (TLLLLIGCQL…DNKRWMGNKA (121 aa)) are esterase domain 1. Residues 23–407 (FGFNEPLNIV…PVCIYDPLPV (385 aa)) lie on the Virion surface side of the membrane. Catalysis depends on Ser-45, which acts as the Nucleophile. An intrachain disulfide couples Cys-49 to Cys-70. N-linked (GlcNAc...) asparagine; by host glycosylation is found at Asn-94, Asn-152, Asn-196, Asn-246, Asn-309, and Asn-316. A disulfide bond links Cys-118 and Cys-167. The interval 133-281 (RFYARVYEKM…GNYKAVSLEY (149 aa)) is receptor binding. 2 cysteine pairs are disulfide-bonded: Cys-202/Cys-291 and Cys-210/Cys-264. Positions 282–395 (LLSLPSKAIC…HCPTAANIGY (114 aa)) are esterase domain 2. A disulfide bridge connects residues Cys-322 and Cys-327. Asn-331 carries an N-linked (GlcNAc...) asparagine; by host glycan. Catalysis depends on charge relay system residues Asp-342 and His-345. N-linked (GlcNAc...) asparagine; by host glycans are attached at residues Asn-360 and Asn-374. Cys-363 and Cys-387 are oxidised to a cystine. A helical membrane pass occupies residues 408 to 428 (ILLGVLLGIAVLIIVFLMFYF). At 429–439 (MTDSGVRLHEA) the chain is on the intravirion side.

The protein belongs to the influenza type C/coronaviruses hemagglutinin-esterase family. Homodimer; disulfide-linked. Forms a complex with the M protein in the pre-Golgi. Associates then with S-M complex to form a ternary complex S-M-HE. Post-translationally, N-glycosylated in the host RER.

The protein localises to the virion membrane. It is found in the host cell membrane. It catalyses the reaction N-acetyl-9-O-acetylneuraminate + H2O = N-acetylneuraminate + acetate + H(+). The catalysed reaction is N-acetyl-4-O-acetylneuraminate + H2O = N-acetylneuraminate + acetate + H(+). Structural protein that makes short spikes at the surface of the virus. Contains receptor binding and receptor-destroying activities. Mediates de-O-acetylation of N-acetyl-4-O-acetylneuraminic acid, which is probably the receptor determinant recognized by the virus on the surface of erythrocytes and susceptible cells. This receptor-destroying activity is important for virus release as it probably helps preventing self-aggregation and ensures the efficient spread of the progeny virus from cell to cell. May serve as a secondary viral attachment protein for initiating infection, the spike protein being the major one. May become a target for both the humoral and the cellular branches of the immune system. The sequence is that of Hemagglutinin-esterase from Murine coronavirus (strain S) (MHV-S).